Consider the following 662-residue polypeptide: UvrABC system protein B (662 aa).

The 158-residue stretch at 31–188 (DNIEGGEKAQ…NDLVDIQFER (158 aa)) folds into the Helicase ATP-binding domain. 44 to 51 (GATGTGKT) contributes to the ATP binding site. A Beta-hairpin motif is present at residues 97-120 (YYDYYQPEAYVPSSDTYIEKDSSV). The Helicase C-terminal domain maps to 435-601 (QIDDLLGEIN…TIKKEIRDLI (167 aa)). In terms of domain architecture, UVR spans 626–661 (KELVKKLEKQMQEAVEVLDFELAAQIRDMMLEVKAL).

This sequence belongs to the UvrB family. Forms a heterotetramer with UvrA during the search for lesions. Interacts with UvrC in an incision complex.

Its subcellular location is the cytoplasm. Its function is as follows. The UvrABC repair system catalyzes the recognition and processing of DNA lesions. A damage recognition complex composed of 2 UvrA and 2 UvrB subunits scans DNA for abnormalities. Upon binding of the UvrA(2)B(2) complex to a putative damaged site, the DNA wraps around one UvrB monomer. DNA wrap is dependent on ATP binding by UvrB and probably causes local melting of the DNA helix, facilitating insertion of UvrB beta-hairpin between the DNA strands. Then UvrB probes one DNA strand for the presence of a lesion. If a lesion is found the UvrA subunits dissociate and the UvrB-DNA preincision complex is formed. This complex is subsequently bound by UvrC and the second UvrB is released. If no lesion is found, the DNA wraps around the other UvrB subunit that will check the other stand for damage. This chain is UvrABC system protein B, found in Streptococcus pneumoniae (strain Hungary19A-6).